The sequence spans 244 residues: 1-(5-phosphoribosyl)-5-[(5-phosphoribosylamino)methylideneamino] imidazole-4-carboxamide isomerase (244 aa).

D8 (proton acceptor) is an active-site residue. The Proton donor role is filled by D129.

Belongs to the HisA/HisF family.

It is found in the cytoplasm. It catalyses the reaction 1-(5-phospho-beta-D-ribosyl)-5-[(5-phospho-beta-D-ribosylamino)methylideneamino]imidazole-4-carboxamide = 5-[(5-phospho-1-deoxy-D-ribulos-1-ylimino)methylamino]-1-(5-phospho-beta-D-ribosyl)imidazole-4-carboxamide. The protein operates within amino-acid biosynthesis; L-histidine biosynthesis; L-histidine from 5-phospho-alpha-D-ribose 1-diphosphate: step 4/9. This Thermodesulfovibrio yellowstonii (strain ATCC 51303 / DSM 11347 / YP87) protein is 1-(5-phosphoribosyl)-5-[(5-phosphoribosylamino)methylideneamino] imidazole-4-carboxamide isomerase.